Reading from the N-terminus, the 227-residue chain is Protein MobD (227 aa).

This chain is Protein MobD (mobD), found in Acidithiobacillus ferrooxidans (Thiobacillus ferrooxidans).